Reading from the N-terminus, the 437-residue chain is Doublesex- and mab-3-related transcription factor A2 (437 aa).

The DM DNA-binding region spans 49-96 (CARCRNHGVVSALKGHKRYCRWKDCMCAKCTLIAERQRVMAAQVALRR). 2 disordered regions span residues 163–254 (SVTP…ARQR) and 297–317 (DKSEETWSRDGALPSIQPSVS). Composition is skewed to low complexity over residues 179 to 201 (SESVSGSAPGASSPEARPGSGSE) and 223 to 235 (SPSSISPLGSESG). A DMA domain is found at 254–289 (RTPIDILTRVFPAQKRSVLELVLQGCGGDVVQAIEQ).

It belongs to the DMRT family.

It is found in the nucleus. Functionally, may be involved in sexual development. The chain is Doublesex- and mab-3-related transcription factor A2 (dmrta2) from Xenopus tropicalis (Western clawed frog).